Consider the following 74-residue polypeptide: Exodeoxyribonuclease 7 small subunit (74 aa).

This sequence belongs to the XseB family. In terms of assembly, heterooligomer composed of large and small subunits.

The protein localises to the cytoplasm. It carries out the reaction Exonucleolytic cleavage in either 5'- to 3'- or 3'- to 5'-direction to yield nucleoside 5'-phosphates.. Bidirectionally degrades single-stranded DNA into large acid-insoluble oligonucleotides, which are then degraded further into small acid-soluble oligonucleotides. The polypeptide is Exodeoxyribonuclease 7 small subunit (Ruthia magnifica subsp. Calyptogena magnifica).